Here is a 514-residue protein sequence, read N- to C-terminus: 2-isopropylmalate synthase (514 aa).

The Pyruvate carboxyltransferase domain occupies 5–268 (LIIFDTTLRD…DVGIDTSQIV (264 aa)). 4 residues coordinate Mn(2+): Asp14, His202, His204, and Asn239. A regulatory domain region spans residues 395-514 (KFVSLSQRSE…KDDKVNPQRS (120 aa)).

The protein belongs to the alpha-IPM synthase/homocitrate synthase family. LeuA type 1 subfamily. In terms of assembly, homodimer. Mn(2+) is required as a cofactor.

The protein resides in the cytoplasm. The catalysed reaction is 3-methyl-2-oxobutanoate + acetyl-CoA + H2O = (2S)-2-isopropylmalate + CoA + H(+). The protein operates within amino-acid biosynthesis; L-leucine biosynthesis; L-leucine from 3-methyl-2-oxobutanoate: step 1/4. In terms of biological role, catalyzes the condensation of the acetyl group of acetyl-CoA with 3-methyl-2-oxobutanoate (2-ketoisovalerate) to form 3-carboxy-3-hydroxy-4-methylpentanoate (2-isopropylmalate). The protein is 2-isopropylmalate synthase of Burkholderia cenocepacia (strain ATCC BAA-245 / DSM 16553 / LMG 16656 / NCTC 13227 / J2315 / CF5610) (Burkholderia cepacia (strain J2315)).